A 220-amino-acid chain; its full sequence is Putative tyrosine-protein phosphatase 1 (220 aa).

The Tyrosine-protein phosphatase domain occupies 67–218 (FKVPLNAELF…LLARKHVRGQ (152 aa)).

It belongs to the protein-tyrosine phosphatase family. Non-receptor class CDC14 subfamily.

It carries out the reaction O-phospho-L-tyrosyl-[protein] + H2O = L-tyrosyl-[protein] + phosphate. Its function is as follows. Could be inactive as the active site cysteine is modified to tryptophan. This chain is Putative tyrosine-protein phosphatase 1 (PTP-1), found in Orgyia pseudotsugata multicapsid polyhedrosis virus (OpMNPV).